A 437-amino-acid chain; its full sequence is MATAVSTIGSVNRAPPNLNGSSSSASVPSSTFLGSSLKKVNSRFTNSKVSSGSLRIVASVDEDKQTDKDRWKGLAFDTSDDQQDITRGKGKVDSLFQAPQGSGTHFAIMSSYEYISTGLRQYNFDNNMDGYYIAPAFMDKLVVHITKNFMTLPNMKVPLILGIWGGKGQGKSFQCELVFAKMRISPIMMSAGELESGNAGEPAKLIRQRYREAADIIRKGKMCALFINDLDAGAGRLGGTTQYTVNNQMVNATLMNIADNPTNVQLPGMYNKEENPRVPIIVTGNDFSTLYAPLIRDGRMEKFYWAPTREDRIGVCIGIFRSDNVAKEDIVKLVDTFPGQSIDFFGALRARVYDDEVRKWITGVGVDSIGKKLVNSKEGPPTFEQPKMTIEKLLEYGNMLVQEQENVKRVQLADKYLSEAALGDANSDAMNTGTFYG.

Residues 1–10 show a composition bias toward polar residues; sequence MATAVSTIGS. The interval 1-26 is disordered; that stretch reads MATAVSTIGSVNRAPPNLNGSSSSAS. 165-172 lines the ATP pocket; that stretch reads GGKGQGKS.

It belongs to the RuBisCO activase family.

It localises to the plastid. Its subcellular location is the chloroplast stroma. Its function is as follows. Activation of RuBisCO (ribulose-1,5-bisphosphate carboxylase/oxygenase; EC 4.1.1.39) involves the ATP-dependent carboxylation of the epsilon-amino group of lysine leading to a carbamate structure. The chain is Ribulose bisphosphate carboxylase/oxygenase activase, chloroplastic (RCA) from Malus domestica (Apple).